A 410-amino-acid polypeptide reads, in one-letter code: Bifunctional enzyme IspD/IspF (410 aa).

Residues 1 to 257 (MSHDPVVPSA…AGAGSASSRL (257 aa)) form a 2-C-methyl-D-erythritol 4-phosphate cytidylyltransferase region. Residues 258–410 (RSGIGTDVHA…AVATALVERL (153 aa)) are 2-C-methyl-D-erythritol 2,4-cyclodiphosphate synthase. Residues Asp264 and His266 each contribute to the a divalent metal cation site. 4-CDP-2-C-methyl-D-erythritol 2-phosphate contacts are provided by residues 264 to 266 (DVH) and 290 to 291 (HS). Residue His298 coordinates a divalent metal cation. 4-CDP-2-C-methyl-D-erythritol 2-phosphate-binding positions include 312–314 (DIG), 385–388 (TTTD), Phe392, and Arg395.

It in the N-terminal section; belongs to the IspD/TarI cytidylyltransferase family. IspD subfamily. The protein in the C-terminal section; belongs to the IspF family. It depends on a divalent metal cation as a cofactor.

It carries out the reaction 2-C-methyl-D-erythritol 4-phosphate + CTP + H(+) = 4-CDP-2-C-methyl-D-erythritol + diphosphate. It catalyses the reaction 4-CDP-2-C-methyl-D-erythritol 2-phosphate = 2-C-methyl-D-erythritol 2,4-cyclic diphosphate + CMP. It participates in isoprenoid biosynthesis; isopentenyl diphosphate biosynthesis via DXP pathway; isopentenyl diphosphate from 1-deoxy-D-xylulose 5-phosphate: step 2/6. Its pathway is isoprenoid biosynthesis; isopentenyl diphosphate biosynthesis via DXP pathway; isopentenyl diphosphate from 1-deoxy-D-xylulose 5-phosphate: step 4/6. Functionally, bifunctional enzyme that catalyzes the formation of 4-diphosphocytidyl-2-C-methyl-D-erythritol from CTP and 2-C-methyl-D-erythritol 4-phosphate (MEP) (IspD), and catalyzes the conversion of 4-diphosphocytidyl-2-C-methyl-D-erythritol 2-phosphate (CDP-ME2P) to 2-C-methyl-D-erythritol 2,4-cyclodiphosphate (ME-CPP) with a corresponding release of cytidine 5-monophosphate (CMP) (IspF). This is Bifunctional enzyme IspD/IspF from Clavibacter michiganensis subsp. michiganensis (strain NCPPB 382).